Here is a 347-residue protein sequence, read N- to C-terminus: Protein O-mannose kinase (347 aa).

The Cytoplasmic segment spans residues 1 to 14 (MGGTAVGGVIGVRC). Residues 15 to 35 (GVPAVLLCLGALLCANVLLYF) form a helical; Signal-anchor for type II membrane protein membrane-spanning segment. The Lumenal portion of the chain corresponds to 36 to 347 (YLDALYQNTN…SQSQRVRDML (312 aa)). The Protein kinase domain maps to 79–347 (VRRVKLIGQG…SQSQRVRDML (269 aa)).

This sequence belongs to the protein kinase superfamily. Ser/Thr protein kinase family. STKL subfamily.

It is found in the endoplasmic reticulum membrane. The enzyme catalyses 3-O-[beta-D-GalNAc-(1-&gt;3)-beta-D-GlcNAc-(1-&gt;4)-alpha-D-Man]-L-Thr-[protein] + ATP = 3-O-[beta-D-GalNAc-(1-&gt;3)-beta-D-GlcNAc-(1-&gt;4)-(O-6-P-alpha-D-Man)]-Thr-[protein] + ADP + H(+). In terms of biological role, protein O-mannose kinase that specifically mediates phosphorylation at the 6-position of an O-mannose of the trisaccharide (N-acetylgalactosamine (GalNAc)-beta-1,3-N-acetylglucosamine (GlcNAc)-beta-1,4-mannose) to generate phosphorylated O-mannosyl trisaccharide (N-acetylgalactosamine-beta-1,3-N-acetylglucosamine-beta-1,4-(phosphate-6-)mannose). Phosphorylated O-mannosyl trisaccharide is a carbohydrate structure present in alpha-dystroglycan (dag1), which is required for binding laminin G-like domain-containing extracellular proteins with high affinity. Only shows kinase activity when the GalNAc-beta-3-GlcNAc-beta-terminus is linked to the 4-position of O-mannose, suggesting that this disaccharide serves as the substrate recognition motif. The chain is Protein O-mannose kinase (pomk) from Danio rerio (Zebrafish).